The chain runs to 172 residues: C-phycocyanin-2 beta subunit (172 aa).

An N4-methylasparagine modification is found at N72. (2R,3E)-phycocyanobilin-binding residues include C82 and C153.

It belongs to the phycobiliprotein family. As to quaternary structure, heterodimer of an alpha and a beta subunit, which further assembles into trimers and the trimers into hexamers. Contains two covalently linked bilin chromophores.

It is found in the cellular thylakoid membrane. Light-harvesting photosynthetic bile pigment-protein from the phycobiliprotein complex (phycobilisome, PBS). Phycocyanin is the major phycobiliprotein in the PBS rod. This chain is C-phycocyanin-2 beta subunit (cpcB2), found in Pseudanabaena tenuis (strain PCC 7409).